The primary structure comprises 134 residues: Ribosome-binding factor A (134 aa).

This sequence belongs to the RbfA family. As to quaternary structure, monomer. Binds 30S ribosomal subunits, but not 50S ribosomal subunits or 70S ribosomes.

It localises to the cytoplasm. In terms of biological role, one of several proteins that assist in the late maturation steps of the functional core of the 30S ribosomal subunit. Associates with free 30S ribosomal subunits (but not with 30S subunits that are part of 70S ribosomes or polysomes). Required for efficient processing of 16S rRNA. May interact with the 5'-terminal helix region of 16S rRNA. In Bdellovibrio bacteriovorus (strain ATCC 15356 / DSM 50701 / NCIMB 9529 / HD100), this protein is Ribosome-binding factor A.